Consider the following 808-residue polypeptide: Probable mannosyl-oligosaccharide glucosidase (808 aa).

The Cytoplasmic portion of the chain corresponds to 1-11 (MVSDMLGGNKR). The chain crosses the membrane as a helical; Signal-anchor for type II membrane protein span at residues 12–31 (WILFGLLSFLLNCVLVSCSV). Topologically, residues 32–808 (EDIEKAANDS…LVVNIMSENY (777 aa)) are lumenal. Asparagine 39 carries N-linked (GlcNAc...) asparagine glycosylation. Aspartate 580 functions as the Proton donor in the catalytic mechanism. Glutamate 778 acts as the Proton acceptor in catalysis.

The protein belongs to the glycosyl hydrolase 63 family.

The protein localises to the endoplasmic reticulum membrane. The catalysed reaction is N(4)-(alpha-D-Glc-(1-&gt;2)-alpha-D-Glc-(1-&gt;3)-alpha-D-Glc-(1-&gt;3)-alpha-D-Man-(1-&gt;2)-alpha-D-Man-(1-&gt;2)-alpha-D-Man-(1-&gt;3)-[alpha-D-Man-(1-&gt;2)-alpha-D-Man-(1-&gt;3)-[alpha-D-Man-(1-&gt;2)-alpha-D-Man-(1-&gt;6)]-alpha-D-Man-(1-&gt;6)]-beta-D-Man-(1-&gt;4)-beta-D-GlcNAc-(1-&gt;4)-beta-D-GlcNAc)-L-asparaginyl-[protein] + H2O = N(4)-(alpha-D-Glc-(1-&gt;3)-alpha-D-Glc-(1-&gt;3)-alpha-D-Man-(1-&gt;2)-alpha-D-Man-(1-&gt;2)-alpha-D-Man-(1-&gt;3)-[alpha-D-Man-(1-&gt;2)-alpha-D-Man-(1-&gt;3)-[alpha-D-Man-(1-&gt;2)-alpha-D-Man-(1-&gt;6)]-alpha-D-Man-(1-&gt;6)]-beta-D-Man-(1-&gt;4)-beta-D-GlcNAc-(1-&gt;4)-beta-D-GlcNAc)-L-asparaginyl-[protein] + beta-D-glucose. Cleaves the distal alpha 1,2-linked glucose residue from the Glc(3)Man(9)GlcNAc(2) oligosaccharide precursor highly specifically. The chain is Probable mannosyl-oligosaccharide glucosidase from Schizosaccharomyces pombe (strain 972 / ATCC 24843) (Fission yeast).